The chain runs to 471 residues: Methylenetetrahydrofolate--tRNA-(uracil-5-)-methyltransferase TrmFO (471 aa).

Position 13 to 18 (13 to 18 (GGGLAG)) interacts with FAD.

It belongs to the MnmG family. TrmFO subfamily. FAD serves as cofactor.

It is found in the cytoplasm. It catalyses the reaction uridine(54) in tRNA + (6R)-5,10-methylene-5,6,7,8-tetrahydrofolate + NADH + H(+) = 5-methyluridine(54) in tRNA + (6S)-5,6,7,8-tetrahydrofolate + NAD(+). The enzyme catalyses uridine(54) in tRNA + (6R)-5,10-methylene-5,6,7,8-tetrahydrofolate + NADPH + H(+) = 5-methyluridine(54) in tRNA + (6S)-5,6,7,8-tetrahydrofolate + NADP(+). Catalyzes the folate-dependent formation of 5-methyl-uridine at position 54 (M-5-U54) in all tRNAs. This chain is Methylenetetrahydrofolate--tRNA-(uracil-5-)-methyltransferase TrmFO, found in Azorhizobium caulinodans (strain ATCC 43989 / DSM 5975 / JCM 20966 / LMG 6465 / NBRC 14845 / NCIMB 13405 / ORS 571).